We begin with the raw amino-acid sequence, 151 residues long: SsrA-binding protein (151 aa).

This sequence belongs to the SmpB family.

The protein localises to the cytoplasm. Required for rescue of stalled ribosomes mediated by trans-translation. Binds to transfer-messenger RNA (tmRNA), required for stable association of tmRNA with ribosomes. tmRNA and SmpB together mimic tRNA shape, replacing the anticodon stem-loop with SmpB. tmRNA is encoded by the ssrA gene; the 2 termini fold to resemble tRNA(Ala) and it encodes a 'tag peptide', a short internal open reading frame. During trans-translation Ala-aminoacylated tmRNA acts like a tRNA, entering the A-site of stalled ribosomes, displacing the stalled mRNA. The ribosome then switches to translate the ORF on the tmRNA; the nascent peptide is terminated with the 'tag peptide' encoded by the tmRNA and targeted for degradation. The ribosome is freed to recommence translation, which seems to be the essential function of trans-translation. This chain is SsrA-binding protein, found in Nitrosomonas europaea (strain ATCC 19718 / CIP 103999 / KCTC 2705 / NBRC 14298).